The sequence spans 630 residues: UvrABC system protein C (630 aa).

Positions 18–97 (TQSGVYLMKN…IKKHRPKYNI (80 aa)) constitute a GIY-YIG domain. The 36-residue stretch at 207–242 (KKVIKSMTEKMMGAADEEKFEVAARLRDSIEAIKAI) folds into the UVR domain.

This sequence belongs to the UvrC family. In terms of assembly, interacts with UvrB in an incision complex.

Its subcellular location is the cytoplasm. In terms of biological role, the UvrABC repair system catalyzes the recognition and processing of DNA lesions. UvrC both incises the 5' and 3' sides of the lesion. The N-terminal half is responsible for the 3' incision and the C-terminal half is responsible for the 5' incision. This is UvrABC system protein C from Bdellovibrio bacteriovorus (strain ATCC 15356 / DSM 50701 / NCIMB 9529 / HD100).